The primary structure comprises 280 residues: Chorismate mutase (280 aa).

Positions 3–256 (FMKPETVLDL…EVDYLLRRLE (254 aa)) constitute a Chorismate mutase domain. L-tyrosine is bound by residues Arg-73, Arg-74, Asn-137, Gly-139, and Ser-140. Positions 137, 139, and 140 each coordinate L-tryptophan.

In terms of assembly, homodimer.

It is found in the cytoplasm. It catalyses the reaction chorismate = prephenate. The protein operates within metabolic intermediate biosynthesis; prephenate biosynthesis; prephenate from chorismate: step 1/1. Its activity is regulated as follows. Each dimer has two allosteric binding sites that can bind the regulatory effectors tryptophan or tyrosine. Can bind either one tryptophan or one tyrosine, two tryptophan or two tyrosine or one tryptophan and one tyrosine, which differentially affect the catalytic activity. Activated by tryptophan and subject to feedback inhibition by tyrosine. In the presence of both tryptophan and tyrosine, the enzyme is in the activated state. Its function is as follows. Catalyzes the Claisen rearrangement of chorismate to prephenate. Acts at the first branch point in the aromatic amino acid pathway where it steers biosynthesis towards phenylalanine and tyrosine, and away from tryptophan. The chain is Chorismate mutase from Pichia angusta (Yeast).